Here is a 198-residue protein sequence, read N- to C-terminus: Transmembrane gamma-carboxyglutamic acid protein 2 (198 aa).

A signal peptide spans 1 to 17; that stretch reads MRGRPSLLLVYMGLATC. Positions 18–51 are excised as a propeptide; the sequence is LDTSPHREQNQVLDIFLDAPEAQSFLVGRRRFPR. The region spanning 52–98 is the Gla domain; sequence ANHWDLELLTPGNLERECLEERCSWEEAREYFEDNTLTERFWESYTY. The Extracellular segment spans residues 52–111; the sequence is ANHWDLELLTPGNLERECLEERCSWEEAREYFEDNTLTERFWESYTYNGKGGRGRVDVAG. Cys69 and Cys74 are joined by a disulfide. Glu72 is subject to 4-carboxyglutamate. The helical transmembrane segment at 112–132 threads the bilayer; the sequence is LAVGLTSGILLIVLAGLGAFW. At 133 to 198 the chain is on the cytoplasmic side; the sequence is YLHYRRRRLR…PPYSSLRRPH (66 aa). The segment at 156–198 is disordered; it reads PLSPQTPQSPPLPPGLPTYEQALAASGVHDAPPPPYSSLRRPH. Residues 162 to 171 are compositionally biased toward pro residues; sequence PQSPPLPPGL. Positions 171-174 match the LPXY motif; mediates binding to WW domain-containing proteins motif; that stretch reads LPTY. The short motif at 188–191 is the PPXY motif; mediates binding to WW domain-containing proteins element; the sequence is PPPY.

As to quaternary structure, interacts with NEDD4. Interacts with transcriptional coactivator YAP1. Gamma-carboxyglutamate residues are formed by vitamin K dependent carboxylation. These residues are essential for the binding of calcium.

It localises to the cell membrane. The polypeptide is Transmembrane gamma-carboxyglutamic acid protein 2 (Prrg2) (Mus musculus (Mouse)).